Consider the following 115-residue polypeptide: U3-lycotoxin-Ls1d (115 aa).

The first 20 residues, 1–20 (MKFVLLFGVLLVTLFSYSSA), serve as a signal peptide directing secretion. The propeptide occupies 21–44 (EMLDDFDQADEDELLSLIEKEEAR). 4 cysteine pairs are disulfide-bonded: Cys-48/Cys-63, Cys-55/Cys-72, Cys-62/Cys-87, and Cys-74/Cys-85.

It belongs to the neurotoxin 19 (CSTX) family. 01 subfamily. As to expression, expressed by the venom gland.

Its subcellular location is the secreted. The protein is U3-lycotoxin-Ls1d of Lycosa singoriensis (Wolf spider).